Consider the following 601-residue polypeptide: Glutathione-regulated potassium-efflux system protein KefB (601 aa).

13 consecutive transmembrane segments (helical) span residues 4 to 24 (ADLL…VPLA), 29 to 49 (IGAV…GLGF), 55 to 75 (EILH…GLEL), 87 to 107 (IFGV…GLLM), 111 to 131 (FLWQ…TAMA), 152 to 172 (VLLF…LLAG), 177 to 197 (HFDW…LIGG), 207 to 227 (FIAA…LVLS), 230 to 250 (LFMD…GVLL), 262 to 282 (AIDP…GMSL), 284 to 304 (LGVL…LVVI), 324 to 344 (MQFA…FSTA), and 356 to 376 (ALLL…MKGI). The region spanning 400–519 (KPQVIVVGFG…AGVTQFSRET (120 aa)) is the RCK N-terminal domain.

It belongs to the monovalent cation:proton antiporter 2 (CPA2) transporter (TC 2.A.37) family. KefB subfamily. As to quaternary structure, interacts with the regulatory subunit KefG.

Its subcellular location is the cell inner membrane. Functionally, pore-forming subunit of a potassium efflux system that confers protection against electrophiles. Catalyzes K(+)/H(+) antiport. This chain is Glutathione-regulated potassium-efflux system protein KefB, found in Salmonella heidelberg (strain SL476).